The primary structure comprises 621 residues: tRNA uridine 5-carboxymethylaminomethyl modification enzyme MnmG (621 aa).

11–16 (GAGHAG) provides a ligand contact to FAD. Position 271–285 (271–285 (GPRYCPSVEDKINRF)) interacts with NAD(+).

Belongs to the MnmG family. In terms of assembly, homodimer. Heterotetramer of two MnmE and two MnmG subunits. FAD is required as a cofactor.

Its subcellular location is the cytoplasm. In terms of biological role, NAD-binding protein involved in the addition of a carboxymethylaminomethyl (cmnm) group at the wobble position (U34) of certain tRNAs, forming tRNA-cmnm(5)s(2)U34. The chain is tRNA uridine 5-carboxymethylaminomethyl modification enzyme MnmG from Cytophaga hutchinsonii (strain ATCC 33406 / DSM 1761 / CIP 103989 / NBRC 15051 / NCIMB 9469 / D465).